The following is a 370-amino-acid chain: DNA replication and repair protein RecF (370 aa).

30-37 (GENAQGKT) contacts ATP.

This sequence belongs to the RecF family.

The protein resides in the cytoplasm. Its function is as follows. The RecF protein is involved in DNA metabolism; it is required for DNA replication and normal SOS inducibility. RecF binds preferentially to single-stranded, linear DNA. It also seems to bind ATP. In Staphylococcus carnosus (strain TM300), this protein is DNA replication and repair protein RecF.